A 380-amino-acid polypeptide reads, in one-letter code: Erythronate-4-phosphate dehydrogenase (380 aa).

Ser-45 and Thr-66 together coordinate substrate. Residues Asp-146 and Thr-174 each coordinate NAD(+). The active site involves Arg-207. Residue Asp-231 coordinates NAD(+). Glu-236 is an active-site residue. His-253 serves as the catalytic Proton donor. Gly-256 lines the NAD(+) pocket. A substrate-binding site is contributed by Tyr-257.

This sequence belongs to the D-isomer specific 2-hydroxyacid dehydrogenase family. PdxB subfamily. Homodimer.

Its subcellular location is the cytoplasm. It carries out the reaction 4-phospho-D-erythronate + NAD(+) = (R)-3-hydroxy-2-oxo-4-phosphooxybutanoate + NADH + H(+). It functions in the pathway cofactor biosynthesis; pyridoxine 5'-phosphate biosynthesis; pyridoxine 5'-phosphate from D-erythrose 4-phosphate: step 2/5. Functionally, catalyzes the oxidation of erythronate-4-phosphate to 3-hydroxy-2-oxo-4-phosphonooxybutanoate. The sequence is that of Erythronate-4-phosphate dehydrogenase from Pseudomonas fluorescens (strain Pf0-1).